Reading from the N-terminus, the 397-residue chain is Pectate lyase 4 (397 aa).

Residues 1 to 25 (MGIKHCCYILYFTLALVTLVQAGRL) form the signal peptide. Residue asparagine 36 is glycosylated (N-linked (GlcNAc...) asparagine). An intrachain disulfide couples cysteine 54 to cysteine 71. PbH1 repeat units follow at residues 159-202 (VKNV…HVTG), 203-224 (SSDI…VDVN), and 227-248 (STGV…LLGA). The Ca(2+) site is built by aspartate 194, aspartate 218, and aspartate 222. Residue arginine 274 is part of the active site.

It belongs to the polysaccharide lyase 1 family. Amb a subfamily. As to quaternary structure, monomer. Requires Ca(2+) as cofactor. The N-terminus is blocked. In terms of tissue distribution, pollen and flowers.

It carries out the reaction Eliminative cleavage of (1-&gt;4)-alpha-D-galacturonan to give oligosaccharides with 4-deoxy-alpha-D-galact-4-enuronosyl groups at their non-reducing ends.. It functions in the pathway glycan metabolism; pectin degradation; 2-dehydro-3-deoxy-D-gluconate from pectin: step 2/5. Functionally, has pectate lyase activity. The chain is Pectate lyase 4 from Ambrosia artemisiifolia (Common ragweed).